The following is a 238-amino-acid chain: ATP-dependent dethiobiotin synthetase BioD (238 aa).

13 to 18 (DIGKTF) is a binding site for ATP. Thr-17 is a binding site for Mg(2+). Lys-38 is an active-site residue. Ser-42 serves as a coordination point for substrate. ATP is bound by residues Asp-55, 116–119 (EGSG), 209–211 (PRI), and Asn-216. The Mg(2+) site is built by Asp-55 and Glu-116.

Belongs to the dethiobiotin synthetase family. As to quaternary structure, homodimer. It depends on Mg(2+) as a cofactor.

Its subcellular location is the cytoplasm. The catalysed reaction is (7R,8S)-7,8-diammoniononanoate + CO2 + ATP = (4R,5S)-dethiobiotin + ADP + phosphate + 3 H(+). The protein operates within cofactor biosynthesis; biotin biosynthesis; biotin from 7,8-diaminononanoate: step 1/2. In terms of biological role, catalyzes a mechanistically unusual reaction, the ATP-dependent insertion of CO2 between the N7 and N8 nitrogen atoms of 7,8-diaminopelargonic acid (DAPA, also called 7,8-diammoniononanoate) to form a ureido ring. This Clostridium novyi (strain NT) protein is ATP-dependent dethiobiotin synthetase BioD.